The chain runs to 371 residues: Aminomethyltransferase (371 aa).

This sequence belongs to the GcvT family. The glycine cleavage system is composed of four proteins: P, T, L and H.

It catalyses the reaction N(6)-[(R)-S(8)-aminomethyldihydrolipoyl]-L-lysyl-[protein] + (6S)-5,6,7,8-tetrahydrofolate = N(6)-[(R)-dihydrolipoyl]-L-lysyl-[protein] + (6R)-5,10-methylene-5,6,7,8-tetrahydrofolate + NH4(+). Its function is as follows. The glycine cleavage system catalyzes the degradation of glycine. In Pectobacterium carotovorum subsp. carotovorum (strain PC1), this protein is Aminomethyltransferase.